A 438-amino-acid chain; its full sequence is Trigger factor (438 aa).

A PPIase FKBP-type domain is found at 163–248; the sequence is GDIITIDYEG…VKEIKRKELA (86 aa).

It belongs to the FKBP-type PPIase family. Tig subfamily.

It localises to the cytoplasm. It carries out the reaction [protein]-peptidylproline (omega=180) = [protein]-peptidylproline (omega=0). In terms of biological role, involved in protein export. Acts as a chaperone by maintaining the newly synthesized protein in an open conformation. Functions as a peptidyl-prolyl cis-trans isomerase. The polypeptide is Trigger factor (Desulforudis audaxviator (strain MP104C)).